Consider the following 664-residue polypeptide: MMTEKSNGVKSSPANNHNHHPPPSIKANGKDDHRAGSRPQSVAADDDTSSELQRLAEMDTPRRGRGGFRRIVRLVGIIRDWANKNFREEEPRPDSFLERFRGPELQTVTTHQGDGKGDKDGEGKGTKKKFELFVLDPAGDWYYRWLFVIAMPVLYNWCLLVARACFSDLQRNYFVVWLVLDYFSDTVYIADLIIRLRTGFLEQGLLVKDPKKLRDNYIHTLQFKLDVASIIPTDLIYFAVGIHSPEVRFNRLLHFARMFEFFDRTETRTSYPNIFRISNLVLYILVIIHWNACIYYAISKSIGFGVDTWVYPNITDPEYGYLAREYIYCLYWSTLTLTTIGETPPPVKDEEYLFVIFDFLIGVLIFATIVGNVGSMISNMNATRAEFQAKIDAVKHYMQFRKVSKDMEAKVIKWFDYLWTNKKTVDEREVLKNLPAKLRAEIAINVHLSTLKKVRIFQDCEAGLLVELVLKLRPQVFSPGDYICRKGDIGKEMYIIKEGKLAVVADDGVTQYALLSAGSCFGEISILNIKGSKMGNRRTANIRSLGYSDLFCLSKDDLMEAVTEYPDAKKVLEERGREILMKEGLLDENEVAASMEVDVQEKLEQLETNMETLYTRFARLLAEYTGAQQKLKQRITVLETKMKQNHEDDYLSDGINTPEPAVAE.

Polar residues predominate over residues M1–K10. The interval M1 to P61 is disordered. At M1–L146 the chain is on the cytoplasmic side. A helical membrane pass occupies residues F147–D168. At L169–L178 the chain is on the extracellular side. A helical transmembrane segment spans residues V179–G199. Residues F200–K224 are Cytoplasmic-facing. Residues L225–H243 form a helical membrane-spanning segment. Topologically, residues S244–R248 are extracellular. A helical transmembrane segment spans residues F249 to T267. Residues R268–I274 lie on the Cytoplasmic side of the membrane. The ion conduction pathway stretch occupies residues P272–M380. The helical transmembrane segment at F275 to I298 threads the bilayer. At S299–Y321 the chain is on the extracellular side. 2 consecutive transmembrane segments (helical) span residues L322–I356 and F357–N381. The segment at T339–E342 is selectivity filter. Positions A382 to Q458 are C-linker. At A382–E664 the chain is on the cytoplasmic side. The interval A462–K582 is cyclic nucleotide-binding domain. Residues G522, S525, R538, and T539 each coordinate 3',5'-cyclic GMP. Residues R538 and T539 each contribute to the 3',5'-cyclic AMP site. Residues V599–D653 are a coiled coil.

The protein belongs to the cyclic nucleotide-gated cation channel (TC 1.A.1.5) family. CNGA2 subfamily. In terms of assembly, the olfactory cyclic nucleotide-gated channel is an heterotetramer composed of CNGA2, CNGA4 and CNGB1b subunits with 2:1:1 stoichiometry.

It is found in the cell projection. The protein resides in the cilium membrane. The enzyme catalyses Ca(2+)(in) = Ca(2+)(out). The catalysed reaction is Na(+)(in) = Na(+)(out). It carries out the reaction K(+)(in) = K(+)(out). It catalyses the reaction NH4(+)(in) = NH4(+)(out). The enzyme catalyses Rb(+)(in) = Rb(+)(out). The catalysed reaction is Li(+)(in) = Li(+)(out). It carries out the reaction Cs(+)(in) = Cs(+)(out). In terms of biological role, pore-forming subunit of the olfactory cyclic nucleotide-gated channel. Operates in the cilia of olfactory sensory neurons where chemical stimulation of the odorant is converted to an electrical signal. Mediates odorant-induced cAMP-dependent Ca(2+) influx triggering neuron depolarization. The rise of intracellular Ca(2+) levels potentiates the olfactory response by activating Ca(2+)-dependent Cl(-) channels, but it also serves as a negative feedback signal to desensitize the channel for rapid adaptation to odorants. Conducts cAMP- and cGMP-gated ion currents, with permeability for monovalent and divalent cations. The chain is Cyclic nucleotide-gated channel alpha-2 from Mus musculus (Mouse).